Here is a 149-residue protein sequence, read N- to C-terminus: Large ribosomal subunit protein bL9 (149 aa).

This sequence belongs to the bacterial ribosomal protein bL9 family.

In terms of biological role, binds to the 23S rRNA. This chain is Large ribosomal subunit protein bL9, found in Fusobacterium nucleatum subsp. nucleatum (strain ATCC 25586 / DSM 15643 / BCRC 10681 / CIP 101130 / JCM 8532 / KCTC 2640 / LMG 13131 / VPI 4355).